A 404-amino-acid polypeptide reads, in one-letter code: Phosphopentomutase (404 aa).

The Mn(2+) site is built by aspartate 10, aspartate 303, histidine 308, aspartate 344, histidine 345, and histidine 356.

Belongs to the phosphopentomutase family. Mn(2+) serves as cofactor.

It is found in the cytoplasm. The enzyme catalyses 2-deoxy-alpha-D-ribose 1-phosphate = 2-deoxy-D-ribose 5-phosphate. It catalyses the reaction alpha-D-ribose 1-phosphate = D-ribose 5-phosphate. Its pathway is carbohydrate degradation; 2-deoxy-D-ribose 1-phosphate degradation; D-glyceraldehyde 3-phosphate and acetaldehyde from 2-deoxy-alpha-D-ribose 1-phosphate: step 1/2. Isomerase that catalyzes the conversion of deoxy-ribose 1-phosphate (dRib-1-P) and ribose 1-phosphate (Rib-1-P) to deoxy-ribose 5-phosphate (dRib-5-P) and ribose 5-phosphate (Rib-5-P), respectively. This is Phosphopentomutase from Shewanella baltica (strain OS223).